Consider the following 146-residue polypeptide: Angiogenin (146 aa).

A signal peptide spans 1 to 24 (MVMGPHLLLLVFILGLGLTPPTLA). Glutamine 25 bears the Pyrrolidone carboxylic acid mark. Histidine 37 acts as the Proton acceptor in catalysis. 3 cysteine pairs are disulfide-bonded: cysteine 50/cysteine 105, cysteine 63/cysteine 116, and cysteine 81/cysteine 131. The Nucleolar localization signal signature appears at 55–59 (RLRNM). 2 residues coordinate tRNA: cysteine 105 and isoleucine 127. The Proton donor role is filled by histidine 138.

The protein belongs to the pancreatic ribonuclease family. In terms of assembly, homodimer. Interacts with RNH1; inhibiting ANG ribonuclease activity. Interacts with PCNA.

It localises to the secreted. The protein localises to the nucleus. It is found in the nucleolus. Its subcellular location is the cytoplasm. The protein resides in the stress granule. Its activity is regulated as follows. Has weak tRNA ribonuclease activity by itself due to partial autoinhibition by its C-terminus, which folds into a short alpha-helix that partially occludes the substrate-binding site. In absence of stress, the ribonuclease activity is inhibited by RNH1 in the cytoplasm. In response to stress, dissociates from RNH1 in the cytoplasm and associates with cytoplasmic ribosomes with vacant A-sites: ribosomes directly activate the tRNA ribonuclease activity of ANG by refolding the C-terminal alpha-helix. In response to stress, the angiogenic activity of ANG is inhibited by RNH1 in the nucleus. Its function is as follows. Secreted ribonuclease that can either promote or restrict cell proliferation of target cells, depending on the context. Endocytosed in target cells via its receptor PLXNB2 and translocates to the cytoplasm or nucleus. Under stress conditions, localizes to the cytoplasm and promotes the assembly of stress granules (SGs): specifically cleaves a subset of tRNAs within anticodon loops to produce tRNA-derived stress-induced fragments (tiRNAs), resulting in translation repression and inhibition of cell proliferation. tiRNas also prevent formation of apoptosome, thereby promoting cell survival. Preferentially cleaves RNAs between a pyrimidine and an adenosine residue, suggesting that it cleaves the anticodon loop of tRNA(Ala) (32-UUAGCAU-38) after positions 33 and 36. Cleaves a subset of tRNAs, including tRNA(Ala), tRNA(Glu), tRNA(Gly), tRNA(Lys), tRNA(Val), tRNA(His), tRNA(Asp) and tRNA(Sec). Under growth conditions and in differentiated cells, translocates to the nucleus and stimulates ribosomal RNA (rRNA) transcription, including that containing the initiation site sequences of 45S rRNA, thereby promoting cell growth and proliferation. Angiogenin induces vascularization of normal and malignant tissues via its ability to promote rRNA transcription. Involved in hematopoietic stem and progenitor cell (HSPC) growth and survival by promoting rRNA transcription in growth conditions and inhibiting translation in response to stress, respectively. Mediates the crosstalk between myeloid and intestinal epithelial cells to protect the intestinal epithelial barrier integrity: secreted by myeloid cells and promotes intestinal epithelial cells proliferation and survival. Also mediates osteoclast-endothelial cell crosstalk in growing bone: produced by osteoclasts and protects the neighboring vascular cells against senescence by promoting rRNA transcription. This is Angiogenin (ANG) from Saimiri sciureus (Common squirrel monkey).